The sequence spans 932 residues: RNA-binding protein 12 (932 aa).

The disordered stretch occupies residues 96–116 (DIPPANASRSGPPPSSGMSSR). Residues 98 to 116 (PPANASRSGPPPSSGMSSR) show a composition bias toward low complexity. The region spanning 304–379 (LYVSVHGMPF…RYVEVSPATE (76 aa)) is the RRM 1 domain. Ser-352 and Ser-375 each carry phosphoserine. 2 stretches are compositionally biased toward polar residues: residues 392-401 (KQNMGPSGQT) and 408-417 (LPRSKSPSGQ). The tract at residues 392-424 (KQNMGPSGQTHPPPQTLPRSKSPSGQKRSRSRS) is disordered. Phosphoserine occurs at positions 420, 422, and 424. Residues 430–507 (FCVYLKGLPF…RFIQVHPITK (78 aa)) form the RRM 2 domain. Ser-525 carries the phosphoserine modification. The segment covering 717–734 (NGPPFNFPGNFGGSNAFG) has biased composition (low complexity). Residues 717–853 (NGPPFNFPGN…PGFASSSGKP (137 aa)) form a disordered region. Over residues 783–811 (SGFGGGPQNFGNGPGSLGGPPGFGSGPPG) the composition is skewed to gly residues. Residues 824-836 (AFGPGPGPGPGPG) show a composition bias toward pro residues. Residues 856–932 (TVIKVQNMPF…GSRKVKLVLG (77 aa)) enclose the RRM 3 domain.

The protein resides in the nucleus. The chain is RNA-binding protein 12 (RBM12) from Homo sapiens (Human).